The primary structure comprises 369 residues: S-adenosylmethionine:tRNA ribosyltransferase-isomerase (369 aa).

The protein belongs to the QueA family. Monomer.

It localises to the cytoplasm. It carries out the reaction 7-aminomethyl-7-carbaguanosine(34) in tRNA + S-adenosyl-L-methionine = epoxyqueuosine(34) in tRNA + adenine + L-methionine + 2 H(+). It functions in the pathway tRNA modification; tRNA-queuosine biosynthesis. In terms of biological role, transfers and isomerizes the ribose moiety from AdoMet to the 7-aminomethyl group of 7-deazaguanine (preQ1-tRNA) to give epoxyqueuosine (oQ-tRNA). The sequence is that of S-adenosylmethionine:tRNA ribosyltransferase-isomerase from Acaryochloris marina (strain MBIC 11017).